The chain runs to 207 residues: LexA repressor (207 aa).

A DNA-binding region (H-T-H motif) is located at residues 28–48 (RAEIARRLGFKSPNAAEEHLK). Active-site for autocatalytic cleavage activity residues include serine 126 and lysine 163.

The protein belongs to the peptidase S24 family. Homodimer.

The catalysed reaction is Hydrolysis of Ala-|-Gly bond in repressor LexA.. Functionally, represses a number of genes involved in the response to DNA damage (SOS response), including recA and lexA. In the presence of single-stranded DNA, RecA interacts with LexA causing an autocatalytic cleavage which disrupts the DNA-binding part of LexA, leading to derepression of the SOS regulon and eventually DNA repair. This chain is LexA repressor, found in Marinomonas sp. (strain MWYL1).